Here is a 346-residue protein sequence, read N- to C-terminus: Growth hormone-inducible transmembrane protein (346 aa).

The N-terminal 45 residues, 1–45 (MLAARLVCLRTLPSRVFQPTFITKASPLVKNSITKNQWLLTPSRE), are a transit peptide targeting the mitochondrion. Topologically, residues 46-83 (YATKTRIRTHRGKTGQELKEAALEPSLEKVFKIDQMGK) are mitochondrial matrix. Residues 84–104 (WFVAGGAAVGLGALCYYGLGM) form a helical membrane-spanning segment. The Mitochondrial intermembrane portion of the chain corresponds to 105-126 (SNEIGAIEKAVIWPQYVKDRIH). The helical transmembrane segment at 127–147 (STYMYLAGSIGLTALSALALA) threads the bilayer. At 148–160 (RSPALMNFMMTGS) the chain is on the mitochondrial matrix side. The helical transmembrane segment at 161–181 (WMTIGATFAAMIGAGMLVQSI) threads the bilayer. Over 182-191 (SYEQSPGPKH) the chain is Mitochondrial intermembrane. A helical transmembrane segment spans residues 192-212 (LAWMLHSGVMGAVVAPLTILG). Over 213 to 214 (GP) the chain is Mitochondrial matrix. A helical membrane pass occupies residues 215–235 (LLLRAAWYTAGIVGGLSTVAM). Residues 236-245 (CAPSEKFLNM) lie on the Mitochondrial intermembrane side of the membrane. The helical transmembrane segment at 246 to 266 (GAPLGVGLGLVFASSLGSMFL) threads the bilayer. The Mitochondrial matrix portion of the chain corresponds to 267-272 (PPTSVA). Residues 273-293 (GATLYSVAMYGGLVLFSMFLL) form a helical membrane-spanning segment. Residues 294–346 (YDTQKVVKRAEITPAYGAQKYDPINSMLTIYMDTLNIFMRVATMLATGSNRKK) are Mitochondrial intermembrane-facing.

Belongs to the BI1 family. Interacts with LETM1 and AFG3L2. In terms of processing, undergoes AFG3L2-mediated proteolytic degradation, upon hyperpolarization of mitochondria.

It is found in the mitochondrion inner membrane. In terms of biological role, plays an important role in maintenance of mitochondrial morphology and in mediating either calcium or potassium/proton antiport. Mediates proton-dependent calcium efflux from mitochondrion. Also functions as an electroneutral mitochondrial proton/potassium exchanger. Required for the mitochondrial tubular network and cristae organization. Involved in apoptotic release of cytochrome c. Inhibits AFG3L2 proteolytic activity, stimulating respiration and stabilizing respiratory enzymes in actively respiring mitochondria. However, when mitochondria become hyperpolarized, GHITM loses its inhibitory activity toward AFG3L2 and the now active AFG3L2 turns first on GHITM and, if hyperpolarization persists, on other proteins of the mitochondria, leading to a broad remodeling of the proteome. The sequence is that of Growth hormone-inducible transmembrane protein (Ghitm) from Rattus norvegicus (Rat).